Here is a 391-residue protein sequence, read N- to C-terminus: Pectin acetylesterase 7 (391 aa).

The first 23 residues, 1 to 23 (MGRLKQCWSSLLVLAVLVIGTGA), serve as a signal peptide directing secretion. Active-site charge relay system residues include Ser171, Asp267, and His334.

The protein belongs to the pectinacetylesterase family.

It localises to the secreted. Its subcellular location is the cell wall. In terms of biological role, hydrolyzes acetyl esters in homogalacturonan regions of pectin. In type I primary cell wall, galacturonic acid residues of pectin can be acetylated at the O-2 and O-3 positions. Decreasing the degree of acetylation of pectin gels in vitro alters their physical properties. This is Pectin acetylesterase 7 from Arabidopsis thaliana (Mouse-ear cress).